The following is a 177-amino-acid chain: UPF0316 protein STH2077 (177 aa).

Transmembrane regions (helical) follow at residues 9–29 (AALDLLIIFLAQATYVSVNTV) and 41–61 (LASAISFFEVILWVYALGLVV).

This sequence belongs to the UPF0316 family.

The protein localises to the cell membrane. In Symbiobacterium thermophilum (strain DSM 24528 / JCM 14929 / IAM 14863 / T), this protein is UPF0316 protein STH2077.